A 2890-amino-acid chain; its full sequence is Bifunctional DNA-directed RNA polymerase subunit beta-beta' (2890 aa).

Positions 1-1377 are DNA-directed RNA polymerase subunit beta; the sequence is MSKKIPLKNR…DINIFGDDVD (1377 aa). Residues 1384 to 2890 form a DNA-directed RNA polymerase subunit beta' region; sequence PIVIKEDDRP…LRTLEDDPKF (1507 aa). Residues C1449, C1451, C1465, and C1468 each coordinate Zn(2+). Mg(2+)-binding residues include D1849, D1851, and D1853. C2179, C2253, C2260, and C2263 together coordinate Zn(2+).

In the N-terminal section; belongs to the RNA polymerase beta chain family. The protein in the C-terminal section; belongs to the RNA polymerase beta' chain family. As to quaternary structure, the RNAP catalytic core consists of 2 alpha, 1 beta/beta' and 1 omega subunit. When a sigma factor is associated with the core the holoenzyme is formed, which can initiate transcription. Requires Mg(2+) as cofactor. It depends on Zn(2+) as a cofactor.

The catalysed reaction is RNA(n) + a ribonucleoside 5'-triphosphate = RNA(n+1) + diphosphate. Functionally, DNA-dependent RNA polymerase catalyzes the transcription of DNA into RNA using the four ribonucleoside triphosphates as substrates. This chain is Bifunctional DNA-directed RNA polymerase subunit beta-beta' (rpoBC), found in Helicobacter pylori (strain Shi470).